Here is a 343-residue protein sequence, read N- to C-terminus: MAEFISSIQAMGVAYLGETLWTLVWTILKIAVLIAPILFCVTYLTLAERRLIGFMQVRLGPNRVGVFGILQPLADAVKLFVKETMLPAKAHRTMFILAPILTFSTALVSWAVVPFSPELVLADVNVGVLFILAMSSLGAYGVLLSGWASNTRYSLLGGLRSAAQMISYEVSMGFTLVPVIMLSGSLNLGDIVESQKGLWYALPLLPGFFIYFISVVAETNRAPFDLPEAEAELVSGFCTEYSAMTYGMFFLGEYANIIMVSVLGSLMFLGGWLPPIEALSFIPGIVWLILKTGVLIFFFLWLRATFPRYRYDQLMRLGWKVFLPISLAWIFIVGLAMHLLDMA.

Helical transmembrane passes span 21–41 (WTLVWTILKIAVLIAPILFCV), 95–115 (FILAPILTFSTALVSWAVVPF), 124–144 (VNVGVLFILAMSSLGAYGVLL), 172–192 (MGFTLVPVIMLSGSLNLGDIV), 197–217 (GLWYALPLLPGFFIYFISVVA), 257–277 (IIMVSVLGSLMFLGGWLPPIE), 281–301 (FIPGIVWLILKTGVLIFFFLW), and 317–337 (LGWKVFLPISLAWIFIVGLAM).

Belongs to the complex I subunit 1 family. As to quaternary structure, NDH-1 is composed of 14 different subunits. Subunits NuoA, H, J, K, L, M, N constitute the membrane sector of the complex.

The protein resides in the cell inner membrane. The enzyme catalyses a quinone + NADH + 5 H(+)(in) = a quinol + NAD(+) + 4 H(+)(out). Functionally, NDH-1 shuttles electrons from NADH, via FMN and iron-sulfur (Fe-S) centers, to quinones in the respiratory chain. The immediate electron acceptor for the enzyme in this species is believed to be ubiquinone. Couples the redox reaction to proton translocation (for every two electrons transferred, four hydrogen ions are translocated across the cytoplasmic membrane), and thus conserves the redox energy in a proton gradient. This subunit may bind ubiquinone. The chain is NADH-quinone oxidoreductase subunit H from Magnetococcus marinus (strain ATCC BAA-1437 / JCM 17883 / MC-1).